We begin with the raw amino-acid sequence, 256 residues long: Thiazole synthase (256 aa).

Catalysis depends on lysine 96, which acts as the Schiff-base intermediate with DXP. 1-deoxy-D-xylulose 5-phosphate is bound by residues glycine 157, alanine 184–glycine 185, and asparagine 206–threonine 207.

This sequence belongs to the ThiG family. In terms of assembly, homotetramer. Forms heterodimers with either ThiH or ThiS.

It is found in the cytoplasm. The enzyme catalyses [ThiS sulfur-carrier protein]-C-terminal-Gly-aminoethanethioate + 2-iminoacetate + 1-deoxy-D-xylulose 5-phosphate = [ThiS sulfur-carrier protein]-C-terminal Gly-Gly + 2-[(2R,5Z)-2-carboxy-4-methylthiazol-5(2H)-ylidene]ethyl phosphate + 2 H2O + H(+). The protein operates within cofactor biosynthesis; thiamine diphosphate biosynthesis. In terms of biological role, catalyzes the rearrangement of 1-deoxy-D-xylulose 5-phosphate (DXP) to produce the thiazole phosphate moiety of thiamine. Sulfur is provided by the thiocarboxylate moiety of the carrier protein ThiS. In vitro, sulfur can be provided by H(2)S. The sequence is that of Thiazole synthase from Brucella anthropi (strain ATCC 49188 / DSM 6882 / CCUG 24695 / JCM 21032 / LMG 3331 / NBRC 15819 / NCTC 12168 / Alc 37) (Ochrobactrum anthropi).